The sequence spans 122 residues: Flagellar protein FliT (122 aa).

The tract at residues 1–50 (MTSTVEFINRWQRIALLSQSLLELAQRGEWDLLLQQEVSYLQRIETVMEK) is required for homodimerization. The tract at residues 60 to 98 (IQDMVAGYIKQTLDNEQLLKGLLQQRLDELSSLIGQSTR) is fliD binding.

The protein belongs to the FliT family. As to quaternary structure, homodimer. Interacts with FliD and FlhC.

It is found in the cytoplasm. The protein resides in the cytosol. In terms of biological role, dual-function protein that regulates the transcription of class 2 flagellar operons and that also acts as an export chaperone for the filament-capping protein FliD. As a transcriptional regulator, acts as an anti-FlhDC factor; it directly binds FlhC, thus inhibiting the binding of the FlhC/FlhD complex to class 2 promoters, resulting in decreased expression of class 2 flagellar operons. As a chaperone, effects FliD transition to the membrane by preventing its premature polymerization, and by directing it to the export apparatus. The polypeptide is Flagellar protein FliT (Salmonella paratyphi A (strain AKU_12601)).